Consider the following 373-residue polypeptide: DNA primase small subunit PriS (373 aa).

Active-site residues include aspartate 95, aspartate 97, and aspartate 281.

The protein belongs to the eukaryotic-type primase small subunit family. As to quaternary structure, heterodimer of a small subunit (PriS) and a large subunit (PriL). It depends on Mg(2+) as a cofactor. Mn(2+) is required as a cofactor.

Functionally, catalytic subunit of DNA primase, an RNA polymerase that catalyzes the synthesis of short RNA molecules used as primers for DNA polymerase during DNA replication. The small subunit contains the primase catalytic core and has DNA synthesis activity on its own. Binding to the large subunit stabilizes and modulates the activity, increasing the rate of DNA synthesis while decreasing the length of the DNA fragments, and conferring RNA synthesis capability. The DNA polymerase activity may enable DNA primase to also catalyze primer extension after primer synthesis. May also play a role in DNA repair. This is DNA primase small subunit PriS from Nitrosopumilus maritimus (strain SCM1).